The following is a 1581-amino-acid chain: Spike glycoprotein (1581 aa).

An N-terminal signal peptide occupies residues 1–20 (MFLCFCAATVLCFWINSGGA). At 21–1551 (DVVPNGTLIF…YNLLPTWITW (1531 aa)) the chain is on the virion surface side. N-linked (GlcNAc...) asparagine; by host glycosylation is found at Asn25, Asn384, Asn494, Asn574, Asn935, Asn969, Asn1267, Asn1297, Asn1385, Asn1389, Asn1428, Asn1431, Asn1438, Asn1483, Asn1487, Asn1495, and Asn1515. A helical membrane pass occupies residues 1552–1572 (LTLGFSLFSIVISGINIILFF). Over 1573 to 1581 (EMNGKVKKS) the chain is Intravirion.

This sequence belongs to the toroviruses spike protein family. As to quaternary structure, homotrimer.

It localises to the virion membrane. Mediates the binding of virions to the host cell receptor and is involved in membrane fusion. In Berne virus (BEV), this protein is Spike glycoprotein (S).